Consider the following 344-residue polypeptide: Methionine import ATP-binding protein MetN (344 aa).

Residues 2–241 enclose the ABC transporter domain; that stretch reads IEIRNLSQRF…PHHEVTRALI (240 aa). 38–45 contributes to the ATP binding site; the sequence is GRSGAGKS.

The protein belongs to the ABC transporter superfamily. Methionine importer (TC 3.A.1.24) family. In terms of assembly, the complex is composed of two ATP-binding proteins (MetN), two transmembrane proteins (MetI) and a solute-binding protein (MetQ).

It localises to the cell inner membrane. The catalysed reaction is L-methionine(out) + ATP + H2O = L-methionine(in) + ADP + phosphate + H(+). It carries out the reaction D-methionine(out) + ATP + H2O = D-methionine(in) + ADP + phosphate + H(+). Its function is as follows. Part of the ABC transporter complex MetNIQ involved in methionine import. Responsible for energy coupling to the transport system. The protein is Methionine import ATP-binding protein MetN of Burkholderia thailandensis (strain ATCC 700388 / DSM 13276 / CCUG 48851 / CIP 106301 / E264).